A 359-amino-acid polypeptide reads, in one-letter code: Cell division protein ZipA (359 aa).

Residues 1-4 (MDLN) are Periplasmic-facing. The helical transmembrane segment at 5 to 25 (TILIILGILALVALVAHGLWS) threads the bilayer. The Cytoplasmic portion of the chain corresponds to 26 to 359 (NRREKSQYFE…AEEEYLAKIK (334 aa)). A disordered region spans residues 78–101 (PPVQQPLNTEPEPITQETPVRAEP).

Belongs to the ZipA family. Interacts with FtsZ via their C-terminal domains.

It is found in the cell inner membrane. Essential cell division protein that stabilizes the FtsZ protofilaments by cross-linking them and that serves as a cytoplasmic membrane anchor for the Z ring. Also required for the recruitment to the septal ring of downstream cell division proteins. The chain is Cell division protein ZipA from Mannheimia succiniciproducens (strain KCTC 0769BP / MBEL55E).